A 118-amino-acid chain; its full sequence is Holo-[acyl-carrier-protein] synthase (118 aa).

Asp-8 and Glu-58 together coordinate Mg(2+).

Belongs to the P-Pant transferase superfamily. AcpS family. It depends on Mg(2+) as a cofactor.

The protein resides in the cytoplasm. It carries out the reaction apo-[ACP] + CoA = holo-[ACP] + adenosine 3',5'-bisphosphate + H(+). Functionally, transfers the 4'-phosphopantetheine moiety from coenzyme A to a Ser of acyl-carrier-protein. This chain is Holo-[acyl-carrier-protein] synthase, found in Streptococcus equi subsp. zooepidemicus (strain H70).